The following is a 153-amino-acid chain: Transcriptional repressor NrdR (153 aa).

A zinc finger spans residues 3–34 (CPFCGYEDTRVLDSRELSEGRAIRRRRECPQC). An ATP-cone domain is found at 49-139 (ITVIKKDGRR…VYKDFREIDQ (91 aa)).

The protein belongs to the NrdR family. It depends on Zn(2+) as a cofactor.

Negatively regulates transcription of bacterial ribonucleotide reductase nrd genes and operons by binding to NrdR-boxes. The protein is Transcriptional repressor NrdR of Fervidobacterium nodosum (strain ATCC 35602 / DSM 5306 / Rt17-B1).